A 122-amino-acid polypeptide reads, in one-letter code: Probable DNA-directed RNA polymerase II subunit RPB11 (122 aa).

It belongs to the archaeal Rpo11/eukaryotic RPB11/RPC19 RNA polymerase subunit family. As to quaternary structure, component of the RNA polymerase II (Pol II) complex consisting of 12 subunits.

The protein localises to the nucleus. Functionally, DNA-dependent RNA polymerase catalyzes the transcription of DNA into RNA using the four ribonucleoside triphosphates as substrates. Component of RNA polymerase II which synthesizes mRNA precursors and many functional non-coding RNAs. Pol II is the central component of the basal RNA polymerase II transcription machinery. It is composed of mobile elements that move relative to each other. RPB11 is part of the core element with the central large cleft. The chain is Probable DNA-directed RNA polymerase II subunit RPB11 (rpb-11) from Caenorhabditis elegans.